A 1403-amino-acid polypeptide reads, in one-letter code: Perilipin-4 (1403 aa).

Residues 1-21 (MSASGDGTRVPPKSKGKTLSS) are disordered. Residues Ser-25 and Ser-31 each carry the phosphoserine modification. Residues 33 to 70 (RNLVSHTHSSTSTKDLQTATDPSGTPAPSSKVSTNSQM) are disordered. Tandem repeats lie at residues 104–136 (GVFGIMDAAKGMVQGGLGATQSALVGTKEAVSG), 137–169 (GVMGAVGVAKGLVKGGLDTSKNVLTNTKDTVTT), 170–202 (GVMGAANMAKGTVQTGLDTTKSVVMGTKDTVAT), 203–235 (GLAGAVNVAKGTIQGGLDTTKSVVMGTKDTVTT), 236–268 (GLTGAVNVAKGVVQGGLDTTKSVVMGTKDTVTT), 269–301 (GLTGAMNVAKGTAQMGIDTSKTVLTGTKDTVCA), 302–334 (GATGAINVAKGAAQGGLDTTKSVLIGTKDTVTT), 335–367 (GLTGAVNVAKGAVQGGLDTTKSVVMGTKDTVTT), 368–400 (GLTGAMNVAKGTAQMGLGTSKTVLTGTKDTVCA), 401–433 (GLTGAINVAKGAAQGGLDTTKSVLMGTKDTVTT), 434–466 (GLTGAVNVAKGTIQGGLDTTKSVVMGTKDTVTT), 467–499 (GLTGAVNVAKGTIQGGLDTTKSVVMGTKDTVTT), 500–532 (GLTGAVNVAKGAAQGGLDTTKSVVMGTKDTVTT), 533–565 (GLTGAMNVAKGTAQMGLGTSKTVLTGTKDTVCA), 566–598 (GLTGAINVAKGAAQGGLDTTKSVLMGTKDTVTT), 599–631 (GLTGAVNVAKGTIQGGLDTTKSVVMGTKDTVTT), 632–664 (GLTGAVNVAKGAVQGGLDTTKSVVMGTKDTVTT), 665–697 (GLTGALNVAKGTAQMGIDTSKTVLIGTKDTVCA), 698–730 (GATGAINMAKGAAQGGLDTTKSVLMGTKDTVTT), 731–763 (GLTGAINVAKGSAQGGLDTTKSVLIGTKDTVTT), 764–796 (GLTGALNVAKGTVQTGLDTSQRVLTGTKDNVYA), 797–829 (GVTGAVNVAKGTIQGGLDTTKSVVMGTKDTVTT), 830–862 (GLTGAVNVAKGAVQGGLDTTKSVVMGTKDTVTT), 863–895 (GLTGAMNVAKGTAQMGIDTSKTVLTGTKDTVCA), 896–928 (GLTGAINVAKGATQGGLDTTKSVLMGTKDTVTT), 929–961 (GLTGAINVAKGAAQGGLDTTKSVLLGTKDTVTT), 962–994 (GLTGAANVAKETVQMGLDTSKNILMDTKDSICA), 995–1027 (GATGAITVVKGAAQGGLDTSNAALTGTMDTAKG), and 1028–1060 (TVQTSLDTSKHMLIGMKDTVCAGVTSAMNMAKG). A 29 X 33 AA approximate tandem repeat region spans residues 104–1060 (GVFGIMDAAK…VTSAMNMAKG (957 aa)). Residue Ser-1281 is modified to Phosphoserine. Thr-1287 is modified (phosphothreonine).

Belongs to the perilipin family. Specifically expressed in white adipose tissue and also weakly detected in heart and skeletal muscle (at protein level).

It localises to the cell membrane. Its subcellular location is the cytoplasm. The protein resides in the lipid droplet. May play a role in triacylglycerol packaging into adipocytes. May function as a coat protein involved in the biogenesis of lipid droplets. This chain is Perilipin-4 (Plin4), found in Mus musculus (Mouse).